The chain runs to 310 residues: MTELDEVDSLRSDGDSWTVTESVGATALGVAAARAVETAGANPLIRDEFAPILVSSAGPAWARLADPDIGWLDDDPHGQRLHRLGCDYQAVRTHFSDEYFAAAAGAGIEQAVILAAGLDCRAYRLNWPPEAVVFEIDQPKVLEYKAQILESHGVTAAATRHGVAVDLREDWPAALLRAGFDRDRPTAWLAEGLLPYLPGDAQDRLFEMITDLSAPRSRIAVESFTMNLTGNKQRWNRMRDRLGLDINVEALTYREPGRTDAAEWLANHGWQVYSVSNREEMARLGRPVPEDLVDEAITTTLLRASLEILR.

Residues Asp137 and 166-167 (DL) each bind S-adenosyl-L-methionine.

This sequence belongs to the UPF0677 family.

Exhibits S-adenosyl-L-methionine-dependent methyltransferase activity. In Mycobacterium ulcerans (strain Agy99), this protein is Putative S-adenosyl-L-methionine-dependent methyltransferase MUL_4763.